The sequence spans 434 residues: Histidinol dehydrogenase (434 aa).

Residues S242, Q264, and H267 each contribute to the substrate site. 2 residues coordinate Zn(2+): Q264 and H267. Catalysis depends on proton acceptor residues E332 and H333. Positions 333, 366, 420, and 425 each coordinate substrate. A Zn(2+)-binding site is contributed by D366. H425 contributes to the Zn(2+) binding site.

Belongs to the histidinol dehydrogenase family. Zn(2+) is required as a cofactor.

It carries out the reaction L-histidinol + 2 NAD(+) + H2O = L-histidine + 2 NADH + 3 H(+). It functions in the pathway amino-acid biosynthesis; L-histidine biosynthesis; L-histidine from 5-phospho-alpha-D-ribose 1-diphosphate: step 9/9. Its function is as follows. Catalyzes the sequential NAD-dependent oxidations of L-histidinol to L-histidinaldehyde and then to L-histidine. The chain is Histidinol dehydrogenase from Desulfotalea psychrophila (strain LSv54 / DSM 12343).